The following is a 213-amino-acid chain: Phosphoribosyl-dephospho-CoA transferase (213 aa).

Residues Asp-135 and Asp-137 contribute to the active site.

This sequence belongs to the MdcG family.

It carries out the reaction apo-[malonate decarboxylase ACP] + 2'-(5''-triphospho-alpha-D-ribosyl)-3'-dephospho-CoA = holo-[malonate decarboxylase ACP] + diphosphate. Functionally, transfers 2'-(5-triphosphoribosyl)-3'-dephosphocoenzyme-A to the apo-[acyl-carrier-protein] of the malonate decarboxylase to yield holo-[acyl-carrier-protein]. The sequence is that of Phosphoribosyl-dephospho-CoA transferase from Xanthomonas euvesicatoria pv. vesicatoria (strain 85-10) (Xanthomonas campestris pv. vesicatoria).